A 980-amino-acid polypeptide reads, in one-letter code: LRR receptor-like serine/threonine-protein kinase SIK1 (980 aa).

The first 24 residues, 1–24, serve as a signal peptide directing secretion; it reads MAAARAPWLWWWVVVVVGVAVAEA. Over 25-588 the chain is Extracellular; sequence ASGGGGGGDG…HGQRVNISKT (564 aa). N-linked (GlcNAc...) asparagine glycans are attached at residues asparagine 72 and asparagine 81. 20 LRR repeats span residues 75-98, 99-122, 124-146, 147-170, 171-194, 196-218, 219-242, 243-265, 266-289, 290-312, 314-337, 338-361, 362-385, 387-408, 409-433, 435-457, 458-480, 481-505, 507-529, and 531-554; these read FAVL…IGEL, KNLQ…IGDC, SLKY…ISKL, KQLE…LSQI, PNLK…IYWN, VLQY…MCQL, TGLW…IGNC, TSFE…NIGF, LQVA…IGLM, QALA…ILGN, SYTG…LGNM, SKLS…LGKL, EELF…ISSC, ALNK…GFQK, LESL…LGHI, NLDT…IGDL, EHLL…EFGN, LRSV…LGQL, NLDS…LANC, and SLNN…NFSK. Residues asparagine 230 and asparagine 241 are each glycosylated (N-linked (GlcNAc...) asparagine). Residues asparagine 312 and asparagine 336 are each glycosylated (N-linked (GlcNAc...) asparagine). N-linked (GlcNAc...) asparagine glycans are attached at residues asparagine 381, asparagine 399, and asparagine 416. 2 N-linked (GlcNAc...) asparagine glycosylation sites follow: asparagine 464 and asparagine 493. Residues asparagine 536, asparagine 541, asparagine 551, and asparagine 584 are each glycosylated (N-linked (GlcNAc...) asparagine). Residues 589–609 traverse the membrane as a helical segment; sequence AIACIILGFIILLCVLLLAIY. The Cytoplasmic segment spans residues 610–980; sequence KTNQPQPLVK…FGEVISKHTM (371 aa). The region spanning 653 to 923 is the Protein kinase domain; the sequence is LSEKYIIGYG…EVARVLLSLL (271 aa). ATP contacts are provided by residues 659–667 and lysine 681; that span reads IGYGASSTV. Catalysis depends on aspartate 778, which acts as the Proton acceptor.

The protein belongs to the protein kinase superfamily. Ser/Thr protein kinase family. Post-translationally, autophosphorylated. As to expression, expressed in nodes, vascular bundles of stems, and anthers.

The protein resides in the cell membrane. The enzyme catalyses L-seryl-[protein] + ATP = O-phospho-L-seryl-[protein] + ADP + H(+). The catalysed reaction is L-threonyl-[protein] + ATP = O-phospho-L-threonyl-[protein] + ADP + H(+). Functionally, receptor kinase involved in salt drought stress responses. Acts as a positive regulator of salt and drought tolerance. May promote salt and drought tolerance through the induction of the activities of antioxidative enzymes, such as peroxidase, superoxide dismutase and catalase. May be involved in the control of stomatal development in leaf epidermis. Possesses kinase activity in vitro. Does not seem to be involved in heat tolerance. In Oryza sativa subsp. japonica (Rice), this protein is LRR receptor-like serine/threonine-protein kinase SIK1.